Here is an 863-residue protein sequence, read N- to C-terminus: FO synthase (863 aa).

2 consecutive Radical SAM core domains span residues isoleucine 91 to asparagine 343 and valine 551 to glutamine 792. The cofG-like stretch occupies residues threonine 92–leucine 424. Residues cysteine 105, cysteine 109, cysteine 112, cysteine 565, cysteine 569, and cysteine 572 each contribute to the [4Fe-4S] cluster site. Residues aspartate 528–arginine 861 are cofH-like.

This sequence in the N-terminal section; belongs to the radical SAM superfamily. CofG family. It in the C-terminal section; belongs to the radical SAM superfamily. CofH family. The cofactor is [4Fe-4S] cluster.

It carries out the reaction 5-amino-6-(D-ribitylamino)uracil + L-tyrosine + S-adenosyl-L-methionine = 5-amino-5-(4-hydroxybenzyl)-6-(D-ribitylimino)-5,6-dihydrouracil + 2-iminoacetate + 5'-deoxyadenosine + L-methionine + H(+). The enzyme catalyses 5-amino-5-(4-hydroxybenzyl)-6-(D-ribitylimino)-5,6-dihydrouracil + S-adenosyl-L-methionine = 7,8-didemethyl-8-hydroxy-5-deazariboflavin + 5'-deoxyadenosine + L-methionine + NH4(+) + H(+). It functions in the pathway cofactor biosynthesis; coenzyme F0 biosynthesis. In terms of biological role, catalyzes the radical-mediated synthesis of 7,8-didemethyl-8-hydroxy-5-deazariboflavin (FO) from 5-amino-6-(D-ribitylamino)uracil and L-tyrosine. The chain is FO synthase (fbiC) from Mycobacterium leprae (strain TN).